The sequence spans 345 residues: NADPH dehydrogenase (345 aa).

FMN is bound at residue 23-26 (SPMC). Tyr28 contacts substrate. FMN-binding residues include Ala60 and Gln102. Residue 164–167 (HGAH) participates in substrate binding. FMN is bound by residues Arg215 and 307–308 (GR).

Belongs to the NADH:flavin oxidoreductase/NADH oxidase family. NamA subfamily. As to quaternary structure, homotetramer. FMN is required as a cofactor.

It catalyses the reaction A + NADPH + H(+) = AH2 + NADP(+). Catalyzes the reduction of the double bond of an array of alpha,beta-unsaturated aldehydes and ketones. It also reduces the nitro group of nitroester and nitroaromatic compounds. It could have a role in detoxification processes. The sequence is that of NADPH dehydrogenase from Bacillus cereus (strain B4264).